Reading from the N-terminus, the 359-residue chain is Protein-glutamate methylesterase/protein-glutamine glutaminase 1 (359 aa).

Residues 4–121 (SVLIVDDSAV…RAFLLEAAKE (118 aa)) enclose the Response regulatory domain. The residue at position 55 (Asp-55) is a 4-aspartylphosphate. A CheB-type methylesterase domain is found at 169–354 (YRTTEKIIAI…MSLERIAHML (186 aa)). Active-site residues include Ser-181, His-207, and Asp-303.

It belongs to the CheB family. Phosphorylated by CheA. Phosphorylation of the N-terminal regulatory domain activates the methylesterase activity.

Its subcellular location is the cytoplasm. The catalysed reaction is [protein]-L-glutamate 5-O-methyl ester + H2O = L-glutamyl-[protein] + methanol + H(+). It carries out the reaction L-glutaminyl-[protein] + H2O = L-glutamyl-[protein] + NH4(+). Functionally, involved in chemotaxis. Part of a chemotaxis signal transduction system that modulates chemotaxis in response to various stimuli. Catalyzes the demethylation of specific methylglutamate residues introduced into the chemoreceptors (methyl-accepting chemotaxis proteins or MCP) by CheR. Also mediates the irreversible deamidation of specific glutamine residues to glutamic acid. The protein is Protein-glutamate methylesterase/protein-glutamine glutaminase 1 of Chromobacterium violaceum (strain ATCC 12472 / DSM 30191 / JCM 1249 / CCUG 213 / NBRC 12614 / NCIMB 9131 / NCTC 9757 / MK).